A 698-amino-acid chain; its full sequence is UvrABC system protein B (698 aa).

One can recognise a Helicase ATP-binding domain in the interval 25-183; the sequence is NGLNSGLVHQ…TLIDLQFERN (159 aa). An ATP-binding site is contributed by 38-45; the sequence is GATGTGKT. The Beta-hairpin signature appears at 91–114; that stretch reads YYDAYTPEAYVPSKDLYIEKEAQI. Residues 428 to 594 form the Helicase C-terminal domain; it reads QIDDLLGEIK…GIVKAVRDLT (167 aa). Positions 622–657 constitute a UVR domain; the sequence is FKVINALEKQMKQAAKDLEFEKAALLRDQLTEMRQT.

This sequence belongs to the UvrB family. As to quaternary structure, forms a heterotetramer with UvrA during the search for lesions. Interacts with UvrC in an incision complex.

It localises to the cytoplasm. Its function is as follows. The UvrABC repair system catalyzes the recognition and processing of DNA lesions. A damage recognition complex composed of 2 UvrA and 2 UvrB subunits scans DNA for abnormalities. Upon binding of the UvrA(2)B(2) complex to a putative damaged site, the DNA wraps around one UvrB monomer. DNA wrap is dependent on ATP binding by UvrB and probably causes local melting of the DNA helix, facilitating insertion of UvrB beta-hairpin between the DNA strands. Then UvrB probes one DNA strand for the presence of a lesion. If a lesion is found the UvrA subunits dissociate and the UvrB-DNA preincision complex is formed. This complex is subsequently bound by UvrC and the second UvrB is released. If no lesion is found, the DNA wraps around the other UvrB subunit that will check the other stand for damage. The polypeptide is UvrABC system protein B (Herpetosiphon aurantiacus (strain ATCC 23779 / DSM 785 / 114-95)).